We begin with the raw amino-acid sequence, 741 residues long: Catalase-peroxidase (741 aa).

The tryptophyl-tyrosyl-methioninium (Trp-Tyr) (with M-234) cross-link spans 86–208 (WHSAGSYRIF…FAATEMGLIY (123 aa)). Histidine 87 acts as the Proton acceptor in catalysis. The tryptophyl-tyrosyl-methioninium (Tyr-Met) (with W-86) cross-link spans 208-234 (YVNPEGPGGNPDPLGSAQEIRVAFRRM). Histidine 249 serves as a coordination point for heme b.

The protein belongs to the peroxidase family. Peroxidase/catalase subfamily. In terms of assembly, homodimer or homotetramer. Requires heme b as cofactor. Formation of the three residue Trp-Tyr-Met cross-link is important for the catalase, but not the peroxidase activity of the enzyme.

The catalysed reaction is H2O2 + AH2 = A + 2 H2O. It carries out the reaction 2 H2O2 = O2 + 2 H2O. Functionally, bifunctional enzyme with both catalase and broad-spectrum peroxidase activity. Also displays NADH oxidase, INH lyase and isonicotinoyl-NAD synthase activities. The chain is Catalase-peroxidase from Archaeoglobus fulgidus (strain ATCC 49558 / DSM 4304 / JCM 9628 / NBRC 100126 / VC-16).